Reading from the N-terminus, the 272-residue chain is Orotidine 5'-phosphate decarboxylase (272 aa).

Lysine 95 acts as the Proton donor in catalysis.

Belongs to the OMP decarboxylase family. Type 2 subfamily.

The catalysed reaction is orotidine 5'-phosphate + H(+) = UMP + CO2. It participates in pyrimidine metabolism; UMP biosynthesis via de novo pathway; UMP from orotate: step 2/2. This chain is Orotidine 5'-phosphate decarboxylase, found in Bordetella avium (strain 197N).